The sequence spans 30 residues: Cycloviolacin-O1 (30 aa).

The cyclopeptide (Gly-Asn) cross-link spans 1-30; the sequence is GIPCAESCVYIPCTVTALLGCSCSNRVCYN. Disulfide bonds link C4–C21, C8–C23, and C13–C28.

In terms of processing, this is a cyclic peptide. As to expression, expressed in leaves, petals, petioles and roots but not in runners (at protein level).

In terms of biological role, probably participates in a plant defense mechanism. The protein is Cycloviolacin-O1 of Viola odorata (Sweet violet).